The following is a 288-amino-acid chain: Energy-coupling factor transporter ATP-binding protein EcfA2 (288 aa).

The 243-residue stretch at 2-244 (IKFEKVNYTY…VDFLKAHELG (243 aa)) folds into the ABC transporter domain. 39 to 46 (GHTGSGKS) serves as a coordination point for ATP.

It belongs to the ABC transporter superfamily. Energy-coupling factor EcfA family. In terms of assembly, forms a stable energy-coupling factor (ECF) transporter complex composed of 2 membrane-embedded substrate-binding proteins (S component), 2 ATP-binding proteins (A component) and 2 transmembrane proteins (T component).

It is found in the cell membrane. Functionally, ATP-binding (A) component of a common energy-coupling factor (ECF) ABC-transporter complex. Unlike classic ABC transporters this ECF transporter provides the energy necessary to transport a number of different substrates. In Lactococcus lactis subsp. lactis (strain IL1403) (Streptococcus lactis), this protein is Energy-coupling factor transporter ATP-binding protein EcfA2.